The sequence spans 147 residues: Thyrotropin subunit beta (147 aa).

A signal peptide spans 1-20 (MRVVLLASGVLCLLAGQVLS). Intrachain disulfides connect C22–C72, C36–C87, C39–C126, C47–C103, C51–C105, and C108–C115. N-linked (GlcNAc...) asparagine glycosylation occurs at N43.

Belongs to the glycoprotein hormones subunit beta family. In terms of assembly, heterodimer of a common alpha chain and a unique beta chain which confers biological specificity to thyrotropin, lutropin, follitropin and gonadotropin.

The protein resides in the secreted. Indispensable for the control of thyroid structure and metabolism. May play some role in the biological processes of the immature fishes. In Anguilla japonica (Japanese eel), this protein is Thyrotropin subunit beta (tshb).